Reading from the N-terminus, the 831-residue chain is DNA replication licensing factor MCM6 (831 aa).

Residues 155 to 182 (CLDCGSVIKNVEQQFKYTQPTICVSPTC) form a C4-type zinc finger. Residues 258 to 278 (GERAECRRDSSQQKSSTAGHE) are disordered. Over residues 259-268 (ERAECRRDSS) the composition is skewed to basic and acidic residues. Residues 345 to 551 (YFNKLVGSMA…VTDYHIAHHI (207 aa)) enclose the MCM domain. 395-402 (GDPSCAKS) provides a ligand contact to ATP. An Arginine finger motif is present at residues 527 to 530 (SRFD). The interval 666 to 705 (SEYQDANGDNMDDTDDIENPVDGEEDQQNGAAEPASATAD) is disordered. Over residues 675 to 692 (NMDDTDDIENPVDGEEDQ) the composition is skewed to acidic residues.

The protein belongs to the MCM family. As to quaternary structure, component of the minichromosome maintenance (MCM) complex, a heterotetramer composed of MCM2, MCM3, MCM4, MCM5, MCM6 and MCM7. Interacts with ETG1. Expressed in shoot apex and flower buds.

It localises to the nucleus. It carries out the reaction ATP + H2O = ADP + phosphate + H(+). Functionally, probable component of the MCM2-7 complex (MCM complex) that may function as a DNA helicase and which is essential to undergo a single round of replication initiation and elongation per cell cycle in eukaryotic cells. In Arabidopsis thaliana (Mouse-ear cress), this protein is DNA replication licensing factor MCM6 (MCM6).